The primary structure comprises 305 residues: tRNA pseudouridine synthase B (305 aa).

Asp39 (nucleophile) is an active-site residue.

The protein belongs to the pseudouridine synthase TruB family. Type 1 subfamily.

The catalysed reaction is uridine(55) in tRNA = pseudouridine(55) in tRNA. In terms of biological role, responsible for synthesis of pseudouridine from uracil-55 in the psi GC loop of transfer RNAs. The sequence is that of tRNA pseudouridine synthase B from Staphylococcus aureus (strain MSSA476).